Consider the following 60-residue polypeptide: Probable tautomerase SP_1017 (60 aa).

The Proton acceptor; via imino nitrogen role is filled by Pro2.

This sequence belongs to the 4-oxalocrotonate tautomerase family.

This is Probable tautomerase SP_1017 from Streptococcus pneumoniae serotype 4 (strain ATCC BAA-334 / TIGR4).